Reading from the N-terminus, the 308-residue chain is Apolipoprotein F (308 aa).

Belongs to the apolipoprotein F family.

The protein localises to the secreted. In terms of biological role, minor apolipoprotein that associates with LDL. Inhibits cholesteryl ester transfer protein (CETP) activity and appears to be an important regulator of cholesterol transport. Also associates to a lesser degree with VLDL, Apo-AI and Apo-AII. This is Apolipoprotein F (Apof) from Rattus norvegicus (Rat).